The sequence spans 338 residues: Isopentenyl-diphosphate delta-isomerase (338 aa).

13 to 14 contacts substrate; sequence RK. Residues 72–74, S102, and N130 each bind FMN; that span reads AMT. 102–104 is a substrate binding site; it reads SQR. Q165 serves as a coordination point for substrate. E166 contacts Mg(2+). FMN-binding positions include K197, T227, 274–276, and 295–296; these read GIR and AR.

Belongs to the IPP isomerase type 2 family. Homooctamer. Dimer of tetramers. FMN serves as cofactor. NADPH is required as a cofactor. Requires Mg(2+) as cofactor.

The protein resides in the cytoplasm. The enzyme catalyses isopentenyl diphosphate = dimethylallyl diphosphate. Its function is as follows. Involved in the biosynthesis of isoprenoids. Catalyzes the 1,3-allylic rearrangement of the homoallylic substrate isopentenyl (IPP) to its allylic isomer, dimethylallyl diphosphate (DMAPP). The sequence is that of Isopentenyl-diphosphate delta-isomerase from Deinococcus radiodurans (strain ATCC 13939 / DSM 20539 / JCM 16871 / CCUG 27074 / LMG 4051 / NBRC 15346 / NCIMB 9279 / VKM B-1422 / R1).